The chain runs to 87 residues: uncharacterized protein (87 aa).

Residues 21-41 (LSSSLYSVAFFLFFFPNFLFF) form a helical membrane-spanning segment.

It localises to the membrane. This is an uncharacterized protein from Saccharomyces cerevisiae (strain ATCC 204508 / S288c) (Baker's yeast).